The chain runs to 122 residues: Large ribosomal subunit protein uL14 (122 aa).

It belongs to the universal ribosomal protein uL14 family. As to quaternary structure, part of the 50S ribosomal subunit. Forms a cluster with proteins L3 and L19. In the 70S ribosome, L14 and L19 interact and together make contacts with the 16S rRNA in bridges B5 and B8.

Binds to 23S rRNA. Forms part of two intersubunit bridges in the 70S ribosome. The polypeptide is Large ribosomal subunit protein uL14 (Laribacter hongkongensis (strain HLHK9)).